The primary structure comprises 639 residues: UvrABC system protein C (639 aa).

One can recognise a GIY-YIG domain in the interval 20–97 (ERSGVYRMFD…IKKFQPKFNI (78 aa)). The UVR domain occupies 207 to 242 (KELQENLSRKMEELSSQMRFEEAAEIRDRIKALSYV).

The protein belongs to the UvrC family. Interacts with UvrB in an incision complex.

It localises to the cytoplasm. Its function is as follows. The UvrABC repair system catalyzes the recognition and processing of DNA lesions. UvrC both incises the 5' and 3' sides of the lesion. The N-terminal half is responsible for the 3' incision and the C-terminal half is responsible for the 5' incision. This chain is UvrABC system protein C, found in Rickettsia africae (strain ESF-5).